The chain runs to 276 residues: Polyamine aminopropyltransferase (276 aa).

Positions 3–236 constitute a PABS domain; that stretch reads ELWYTEKQTK…GLWTFTIGSK (234 aa). Position 32 (Gln32) interacts with S-methyl-5'-thioadenosine. Residues His63 and Asp87 each contribute to the spermidine site. S-methyl-5'-thioadenosine-binding positions include Asp107 and 138–139; that span reads DG. Asp156 acts as the Proton acceptor in catalysis. Position 156–159 (156–159) interacts with spermidine; sequence DSTE. Pro163 contributes to the S-methyl-5'-thioadenosine binding site.

It belongs to the spermidine/spermine synthase family. Homodimer or homotetramer.

The protein resides in the cytoplasm. The enzyme catalyses S-adenosyl 3-(methylsulfanyl)propylamine + putrescine = S-methyl-5'-thioadenosine + spermidine + H(+). It participates in amine and polyamine biosynthesis; spermidine biosynthesis; spermidine from putrescine: step 1/1. In terms of biological role, involved in the cell growth and proliferation. Catalyzes the irreversible transfer of a propylamine group from the amino donor S-adenosylmethioninamine (decarboxy-AdoMet) to putrescine (1,4-diaminobutane) to yield spermidine. In Bacillus subtilis (strain 168), this protein is Polyamine aminopropyltransferase.